A 481-amino-acid polypeptide reads, in one-letter code: Glutamyl-tRNA(Gln) amidotransferase subunit A (481 aa).

Active-site charge relay system residues include K76 and S151. The active-site Acyl-ester intermediate is S175.

This sequence belongs to the amidase family. GatA subfamily. Heterotrimer of A, B and C subunits.

The enzyme catalyses L-glutamyl-tRNA(Gln) + L-glutamine + ATP + H2O = L-glutaminyl-tRNA(Gln) + L-glutamate + ADP + phosphate + H(+). Its function is as follows. Allows the formation of correctly charged Gln-tRNA(Gln) through the transamidation of misacylated Glu-tRNA(Gln) in organisms which lack glutaminyl-tRNA synthetase. The reaction takes place in the presence of glutamine and ATP through an activated gamma-phospho-Glu-tRNA(Gln). The polypeptide is Glutamyl-tRNA(Gln) amidotransferase subunit A (Neisseria meningitidis serogroup B (strain ATCC BAA-335 / MC58)).